A 156-amino-acid chain; its full sequence is Large ribosomal subunit protein uL22 (156 aa).

The protein belongs to the universal ribosomal protein uL22 family. Part of the 50S ribosomal subunit.

In terms of biological role, this protein binds specifically to 23S rRNA. It makes multiple contacts with different domains of the 23S rRNA in the assembled 50S subunit and ribosome. Functionally, the globular domain of the protein is located near the polypeptide exit tunnel on the outside of the subunit, while an extended beta-hairpin is found that lines the wall of the exit tunnel in the center of the 70S ribosome. In Sulfolobus acidocaldarius (strain ATCC 33909 / DSM 639 / JCM 8929 / NBRC 15157 / NCIMB 11770), this protein is Large ribosomal subunit protein uL22.